The chain runs to 410 residues: Bifunctional malic/malolactic enzyme (410 aa).

The active-site Proton donor is the Y36. K91 (proton acceptor) is an active-site residue. The a divalent metal cation site is built by E133, D134, and D159. Residues 192-195 (AGAA), N286, and N317 contribute to the NADP(+) site.

It belongs to the malic enzymes family. As to quaternary structure, interacts with BrxC. Mg(2+) is required as a cofactor. Mn(2+) serves as cofactor.

The catalysed reaction is (S)-malate + NADP(+) = pyruvate + CO2 + NADPH. It catalyses the reaction oxaloacetate + H(+) = pyruvate + CO2. The enzyme catalyses (S)-malate + H(+) = (S)-lactate + CO2. With respect to regulation, NADPH is a strong modulator that switches activity from a pyruvate-producing malic enzyme to a lactate-generating malolactic enzyme. Bifunctional enzyme with both malic and malolactic enzyme activities. In the absence of NADPH, catalyzes the reversible decarboxylation of malate to pyruvate. Can use NAD and NADP, but with a very strong preference for NADP. In the presence of excess NADPH, catalyzes the non-oxidative decarboxylation of malate to lactate. During growth on glucose, contributes to NADPH balancing via oxidation of the NADPH produced in excess by other enzymatic reactions. Can also catalyze the decarboxylation of oxaloacetate. The sequence is that of Bifunctional malic/malolactic enzyme (ytsJ) from Bacillus subtilis (strain 168).